We begin with the raw amino-acid sequence, 941 residues long: Isoleucine--tRNA ligase (941 aa).

Positions 59–69 match the 'HIGH' region motif; sequence PYANGNIHIGH. Glu-562 provides a ligand contact to L-isoleucyl-5'-AMP. Residues 603 to 607 carry the 'KMSKS' region motif; that stretch reads KMSKS. An ATP-binding site is contributed by Lys-606. Cys-904, Cys-907, Cys-924, and Cys-927 together coordinate Zn(2+).

Belongs to the class-I aminoacyl-tRNA synthetase family. IleS type 1 subfamily. In terms of assembly, monomer. Requires Zn(2+) as cofactor.

The protein resides in the cytoplasm. It catalyses the reaction tRNA(Ile) + L-isoleucine + ATP = L-isoleucyl-tRNA(Ile) + AMP + diphosphate. Functionally, catalyzes the attachment of isoleucine to tRNA(Ile). As IleRS can inadvertently accommodate and process structurally similar amino acids such as valine, to avoid such errors it has two additional distinct tRNA(Ile)-dependent editing activities. One activity is designated as 'pretransfer' editing and involves the hydrolysis of activated Val-AMP. The other activity is designated 'posttransfer' editing and involves deacylation of mischarged Val-tRNA(Ile). This chain is Isoleucine--tRNA ligase, found in Haemophilus influenzae (strain 86-028NP).